Consider the following 951-residue polypeptide: Kinase suppressor of Ras 2 (951 aa).

The tract at residues proline 237–lysine 298 is disordered. Over residues arginine 260–proline 274 the composition is skewed to low complexity. Phosphothreonine occurs at positions 273 and 277. A Phorbol-ester/DAG-type zinc finger spans residues lysine 413–cysteine 457. The Zn(2+) site is built by histidine 414, cysteine 426, cysteine 429, cysteine 439, cysteine 442, histidine 447, cysteine 450, and cysteine 457. Serine 475 carries the phosphoserine; by MARK3 modification. 2 disordered regions span residues arginine 489–asparagine 559 and glutamate 614–glutamate 634. The span at histidine 494–asparagine 503 shows a compositional bias: polar residues. At threonine 498 the chain carries Phosphothreonine. Positions serine 518–serine 531 are enriched in low complexity. Over residues serine 532–glutamine 552 the composition is skewed to pro residues. A Protein kinase domain is found at leucine 667–leucine 932. An ATP-binding site is contributed by isoleucine 673–valine 681. Aspartate 787 serves as the catalytic Proton donor/acceptor. Residues lysine 789 and aspartate 804 each contribute to the ATP site.

It belongs to the protein kinase superfamily. TKL Ser/Thr protein kinase family. Heterodimerizes (via N-terminus) with BRAF (via N-terminus) in a MAP2K1/MEK1-dependent manner. Interacts with BRAF; this increases the low intrinsic protein kinase activity of KSR2. Interacts with MAP2K1, forming a heterodimer that can dimerize to form a heterotetramer. Interacts with MAP3K8, MAPK, RAS and RAF. Phosphorylated on Ser-475 by MARK3.

It is found in the cytoplasm. The protein resides in the membrane. It catalyses the reaction L-seryl-[protein] + ATP = O-phospho-L-seryl-[protein] + ADP + H(+). It carries out the reaction L-threonyl-[protein] + ATP = O-phospho-L-threonyl-[protein] + ADP + H(+). Its function is as follows. Location-regulated scaffold connecting MEK to RAF. Has very low protein kinase activity and can phosphorylate MAP2K1 at several Ser and Thr residues with very low efficiency (in vitro). Acts as MAP2K1/MEK1-dependent allosteric activator of BRAF; upon binding to MAP2K1/MEK1, dimerizes with BRAF and promotes BRAF-mediated phosphorylation of MAP2K1/MEK1. Interaction with BRAF enhances KSR2-mediated phosphorylation of MAP2K1 (in vitro). Blocks MAP3K8 kinase activity and MAP3K8-mediated signaling. Acts as a negative regulator of MAP3K3-mediated activation of ERK, JNK and NF-kappa-B pathways, inhibiting MAP3K3-mediated interleukin-8 production. This chain is Kinase suppressor of Ras 2, found in Mus musculus (Mouse).